An 86-amino-acid polypeptide reads, in one-letter code: Trypsin inhibitor (86 aa).

Cystine bridges form between Cys8–Cys65 and Cys49–Cys58.

Serine protease inhibitor which is active against trypsin. Displays strong antifungal activity against a number of phytopathogenic fungi including M.melonis, A.cucumerina, A.solani, C.glaeosporioides and P.capsici. In Fagopyrum tataricum (Tartarian buckwheat), this protein is Trypsin inhibitor.